A 135-amino-acid chain; its full sequence is Small ribosomal subunit protein bS16m (135 aa).

The N-terminal 34 residues, Met-1 to Ile-34, are a transit peptide targeting the mitochondrion. Phosphothreonine is present on Thr-130.

The protein belongs to the bacterial ribosomal protein bS16 family. In terms of assembly, component of the mitochondrial ribosome small subunit (28S) which comprises a 12S rRNA and about 30 distinct proteins.

Its subcellular location is the mitochondrion. In Bos taurus (Bovine), this protein is Small ribosomal subunit protein bS16m (MRPS16).